A 248-amino-acid chain; its full sequence is 3-deoxy-manno-octulosonate cytidylyltransferase (248 aa).

Belongs to the KdsB family.

The protein localises to the cytoplasm. It catalyses the reaction 3-deoxy-alpha-D-manno-oct-2-ulosonate + CTP = CMP-3-deoxy-beta-D-manno-octulosonate + diphosphate. It functions in the pathway nucleotide-sugar biosynthesis; CMP-3-deoxy-D-manno-octulosonate biosynthesis; CMP-3-deoxy-D-manno-octulosonate from 3-deoxy-D-manno-octulosonate and CTP: step 1/1. Its pathway is bacterial outer membrane biogenesis; lipopolysaccharide biosynthesis. Activates KDO (a required 8-carbon sugar) for incorporation into bacterial lipopolysaccharide in Gram-negative bacteria. The chain is 3-deoxy-manno-octulosonate cytidylyltransferase from Shigella dysenteriae serotype 1 (strain Sd197).